The chain runs to 343 residues: F17b-G fimbrial adhesin (343 aa).

A signal peptide spans 1–22; sequence MTNFYKVFLAVFILVCCNISHA. The interval 23–199 is receptor-binding lectin domain; the sequence is VVSFIGSTEN…LNPFTLNDTV (177 aa). A carbohydrate is bound by residues 65–66, 110–111, and 138–141; these read AN, DT, and STQG. The cysteines at positions 75 and 132 are disulfide-linked. A fimbrillin-binding domain region spans residues 200 to 343; the sequence is TSCRLLTPSA…GISTFTFSYQ (144 aa). The disordered stretch occupies residues 287 to 307; the sequence is LKFGPDSPVKGNENQWQLSTG. Polar residues predominate over residues 298-307; the sequence is NENQWQLSTG.

This sequence belongs to the fimbrial protein family.

It is found in the fimbrium. Functionally, essential fimbrial adhesion factor that mediates binding to N-acetylglucosamine-containing receptors in the host intestinal microvilli, leading to colonization of the intestinal tissue, and diarrhea or septicemia. Also confers adhesiveness to laminin and basement membranes. The sequence is that of F17b-G fimbrial adhesin (f17bG) from Escherichia coli.